The chain runs to 274 residues: NH(3)-dependent NAD(+) synthetase (274 aa).

46 to 53 (GISGGQDS) serves as a coordination point for ATP. D52 is a Mg(2+) binding site. R140 is a binding site for deamido-NAD(+). T160 is an ATP binding site. E165 serves as a coordination point for Mg(2+). Residues K173 and D180 each coordinate deamido-NAD(+). The ATP site is built by K189 and T211. Residue 260 to 261 (HK) coordinates deamido-NAD(+).

The protein belongs to the NAD synthetase family. Homodimer.

The enzyme catalyses deamido-NAD(+) + NH4(+) + ATP = AMP + diphosphate + NAD(+) + H(+). Its pathway is cofactor biosynthesis; NAD(+) biosynthesis; NAD(+) from deamido-NAD(+) (ammonia route): step 1/1. Catalyzes the ATP-dependent amidation of deamido-NAD to form NAD. Uses ammonia as a nitrogen source. The polypeptide is NH(3)-dependent NAD(+) synthetase (Streptococcus pyogenes serotype M2 (strain MGAS10270)).